The primary structure comprises 281 residues: NAD kinase (281 aa).

Asp-61 serves as the catalytic Proton acceptor. NAD(+)-binding positions include 61–62 (DG), 134–135 (ND), Arg-145, Asp-164, 175–180 (TAYSLS), and Gln-234.

This sequence belongs to the NAD kinase family. Requires a divalent metal cation as cofactor.

Its subcellular location is the cytoplasm. The catalysed reaction is NAD(+) + ATP = ADP + NADP(+) + H(+). In terms of biological role, involved in the regulation of the intracellular balance of NAD and NADP, and is a key enzyme in the biosynthesis of NADP. Catalyzes specifically the phosphorylation on 2'-hydroxyl of the adenosine moiety of NAD to yield NADP. The chain is NAD kinase from Clostridium botulinum (strain ATCC 19397 / Type A).